We begin with the raw amino-acid sequence, 535 residues long: Dimethylaniline monooxygenase [N-oxide-forming] 2 (535 aa).

Position 2 is an N-acetylalanine (alanine 2). FAD is bound by residues 9-13 (GAGVS), glutamate 32, 40-41 (LW), and 61-62 (NT). NADP(+) is bound by residues 60-61 (TN) and 195-198 (SAAD). A Glycyl lysine isopeptide (Lys-Gly) (interchain with G-Cter in SUMO) cross-link involves residue lysine 492. A helical membrane pass occupies residues 510–530 (APVSFLLKILGLLAVVLAFFF).

The protein belongs to the FMO family. FAD serves as cofactor. It depends on Mg(2+) as a cofactor.

It is found in the microsome membrane. The protein resides in the endoplasmic reticulum membrane. Its function is as follows. Catalyzes the oxidative metabolism of numerous xenobiotics, including mainly therapeutic drugs and insecticides that contain a soft nucleophile, most commonly nitrogen and sulfur and participates to their bioactivation. Catalyzes the S-oxygenation of the prodrug ethionamide (ETA) to the S-oxide (ETASO), the first step in its bioactivation following by the second oxygenation to the sulfinic acid but to a lesser extend. The protein is Dimethylaniline monooxygenase [N-oxide-forming] 2 of Mus musculus (Mouse).